The following is a 288-amino-acid chain: Tryptophan 2,3-dioxygenase (288 aa).

Substrate-binding positions include 57 to 61 (FIIQH), Tyr-119, and Arg-123. His-246 is a heme binding site. Thr-260 lines the substrate pocket.

Belongs to the tryptophan 2,3-dioxygenase family. Homotetramer. Requires heme as cofactor.

It carries out the reaction L-tryptophan + O2 = N-formyl-L-kynurenine. It participates in amino-acid degradation; L-tryptophan degradation via kynurenine pathway; L-kynurenine from L-tryptophan: step 1/2. Its function is as follows. Heme-dependent dioxygenase that catalyzes the oxidative cleavage of the L-tryptophan (L-Trp) pyrrole ring and converts L-tryptophan to N-formyl-L-kynurenine. Catalyzes the oxidative cleavage of the indole moiety. The protein is Tryptophan 2,3-dioxygenase of Pseudomonas aeruginosa (strain ATCC 15692 / DSM 22644 / CIP 104116 / JCM 14847 / LMG 12228 / 1C / PRS 101 / PAO1).